We begin with the raw amino-acid sequence, 243 residues long: uncharacterized protein (243 aa).

A helical membrane pass occupies residues 55–75; that stretch reads IILIILLTIFMVISTLVIAFV.

The protein localises to the membrane. This is an uncharacterized protein from Rickettsia prowazekii (strain Madrid E).